A 293-amino-acid polypeptide reads, in one-letter code: 33 kDa chaperonin (293 aa).

Intrachain disulfides connect Cys-238–Cys-240 and Cys-271–Cys-274.

It belongs to the HSP33 family. In terms of processing, under oxidizing conditions two disulfide bonds are formed involving the reactive cysteines. Under reducing conditions zinc is bound to the reactive cysteines and the protein is inactive.

Its subcellular location is the cytoplasm. Redox regulated molecular chaperone. Protects both thermally unfolding and oxidatively damaged proteins from irreversible aggregation. Plays an important role in the bacterial defense system toward oxidative stress. This is 33 kDa chaperonin from Staphylococcus aureus (strain Mu3 / ATCC 700698).